The primary structure comprises 261 residues: Proliferating cell nuclear antigen (261 aa).

N6-acetyllysine is present on residues lysine 14, lysine 77, and lysine 80. Residues 61–80 (RCDRNLAMGVNLTSMSKILK) mediate DNA binding. A disulfide bridge links cysteine 135 with cysteine 162. Lysine 164 participates in a covalent cross-link: Glycyl lysine isopeptide (Lys-Gly) (interchain with G-Cter in SUMO2); alternate. Lysine 164 is covalently cross-linked (Glycyl lysine isopeptide (Lys-Gly) (interchain with G-Cter in ubiquitin); alternate). Tyrosine 211 bears the Phosphotyrosine; by EGFR mark. Lysine 248 carries the post-translational modification N6-acetyllysine. Residue lysine 254 forms a Glycyl lysine isopeptide (Lys-Gly) (interchain with G-Cter in SUMO2) linkage.

It belongs to the PCNA family. As to quaternary structure, homotrimer. Interacts with p300/EP300; the interaction occurs on chromatin in UV-irradiated damaged cells. Interacts with CREBBP (via transactivation domain and C-terminus); the interaction occurs on chromatin in UV-irradiated damaged cells. Directly interacts with POLD1, POLD3 and POLD4 subunits of the DNA polymerase delta complex, POLD3 being the major interacting partner; the interaction with POLD3 is inhibited by CDKN1A/p21(CIP1). Forms a complex with activator 1 heteropentamer in the presence of ATP. Interacts with EXO1, POLH, POLK, DNMT1, ERCC5, FEN1, CDC6 and POLDIP2. Interacts with POLB. Interacts with APEX2; this interaction is triggered by reactive oxygen species and increased by misincorporation of uracil in nuclear DNA. Forms a ternary complex with DNTTIP2 and core histone. Interacts with KCTD10. Interacts with PPP1R15A. Interacts with SMARCA5/SNF2H. Interacts with BAZ1B/WSTF; the interaction is direct and is required for BAZ1B/WSTF binding to replication foci during S phase. Interacts with HLTF and SHPRH. Interacts with NUDT15; this interaction is disrupted in response to UV irradiation and acetylation. Interacts with CDKN1A/p21(CIP1) and CDT1; interacts via their PIP-box which also recruits the DCX(DTL) complex. The interaction with CDKN1A inhibits POLD3 binding. Interacts with DDX11. Interacts with EGFR; positively regulates PCNA. Interacts with PARPBP. Interacts (when ubiquitinated) with SPRTN; leading to enhance RAD18-mediated PCNA ubiquitination. Interacts (when polyubiquitinated) with ZRANB3. Interacts with SMARCAD1. Interacts with CDKN1C. Interacts with PCLAF (via PIP-box). Interacts with RTEL1 (via PIP-box); the interaction is direct and essential for the suppression of telomere fragility. Interacts with FAM111A (via PIP-box); the interaction is direct and required for PCNA loading on chromatin binding. Interacts with LIG1. Interacts with SETMAR. Interacts with ANKRD17. Interacts with FBXO18/FBH1 (via PIP-box); the interaction recruits the DCX(DTL) complex and promotes ubiquitination and degradation of FBXO18/FBH1. Interacts with POLN. Interacts with SDE2 (via PIP-box); the interaction is direct and prevents ultraviolet light induced monoubiquitination. Component of the replisome complex composed of at least DONSON, MCM2, MCM7, PCNA and TICRR; interaction at least with PCNA occurs during DNA replication. Interacts with MAPK15; the interaction is chromatin binding dependent and prevents MDM2-mediated PCNA destruction by inhibiting the association of PCNA with MDM2. Interacts with PARP10 (via PIP-box). Interacts with DDI2. Interacts with HMCES (via PIP-box). Interacts with TRAIP (via PIP-box). Interacts with UHRF2. Interacts with ALKBH2; this interaction is enhanced during the S-phase of the cell cycle. Interacts with ATAD5; the interaction promotes USP1-mediated PCNA deubiquitination. Interacts (when phosphorylated) with GRB2. Interacts with ANG. Interacts with nuclear UNG; this interaction mediates UNG recruitment to S-phase replication foci. Interacts with ERCC6L2 (via an atypical PIP-box); this interaction facilitates cenrtomeric localization of ERCC6L2. Post-translationally, phosphorylated. Phosphorylation at Tyr-211 by EGFR stabilizes chromatin-associated PCNA. Acetylated by CREBBP and p300/EP300; preferentially acetylated by CREBBP on Lys-80, Lys-13 and Lys-14 and on Lys-77 by p300/EP300 upon loading on chromatin in response to UV irradiation. Lysine acetylation disrupts association with chromatin, hence promoting PCNA ubiquitination and proteasomal degradation in response to UV damage in a CREBBP- and EP300-dependent manner. Acetylation disrupts interaction with NUDT15 and promotes degradation. In terms of processing, ubiquitinated. Following DNA damage, can be either monoubiquitinated to stimulate direct bypass of DNA lesions by specialized DNA polymerases or polyubiquitinated to promote recombination-dependent DNA synthesis across DNA lesions by template switching mechanisms. Following induction of replication stress, monoubiquitinated by the UBE2B-RAD18 complex on Lys-164, leading to recruit translesion (TLS) polymerases, which are able to synthesize across DNA lesions in a potentially error-prone manner. An error-free pathway also exists and requires non-canonical polyubiquitination on Lys-164 through 'Lys-63' linkage of ubiquitin moieties by the E2 complex UBE2N-UBE2V2 and the E3 ligases, HLTF, RNF8 and SHPRH. This error-free pathway, also known as template switching, employs recombination mechanisms to synthesize across the lesion, using as a template the undamaged, newly synthesized strand of the sister chromatid. Monoubiquitination at Lys-164 also takes place in undamaged proliferating cells, and is mediated by the DCX(DTL) complex, leading to enhance PCNA-dependent translesion DNA synthesis. Sumoylated during S phase. Post-translationally, methylated on glutamate residues by ARMT1.

Its subcellular location is the nucleus. Its function is as follows. Auxiliary protein of DNA polymerase delta and epsilon, is involved in the control of eukaryotic DNA replication by increasing the polymerase's processibility during elongation of the leading strand. Induces a robust stimulatory effect on the 3'-5' exonuclease and 3'-phosphodiesterase, but not apurinic-apyrimidinic (AP) endonuclease, APEX2 activities. Has to be loaded onto DNA in order to be able to stimulate APEX2. Plays a key role in DNA damage response (DDR) by being conveniently positioned at the replication fork to coordinate DNA replication with DNA repair and DNA damage tolerance pathways. Acts as a loading platform to recruit DDR proteins that allow completion of DNA replication after DNA damage and promote postreplication repair: Monoubiquitinated PCNA leads to recruitment of translesion (TLS) polymerases, while 'Lys-63'-linked polyubiquitination of PCNA is involved in error-free pathway and employs recombination mechanisms to synthesize across the lesion. This Mus musculus (Mouse) protein is Proliferating cell nuclear antigen (Pcna).